We begin with the raw amino-acid sequence, 138 residues long: Holo-[acyl-carrier-protein] synthase (138 aa).

Asp-8 and Glu-60 together coordinate Mg(2+).

The protein belongs to the P-Pant transferase superfamily. AcpS family. It depends on Mg(2+) as a cofactor.

Its subcellular location is the cytoplasm. The catalysed reaction is apo-[ACP] + CoA = holo-[ACP] + adenosine 3',5'-bisphosphate + H(+). Its function is as follows. Transfers the 4'-phosphopantetheine moiety from coenzyme A to a Ser of acyl-carrier-protein. In Magnetococcus marinus (strain ATCC BAA-1437 / JCM 17883 / MC-1), this protein is Holo-[acyl-carrier-protein] synthase.